A 74-amino-acid chain; its full sequence is Putative membrane protein insertion efficiency factor (74 aa).

It belongs to the UPF0161 family.

The protein resides in the cell membrane. In terms of biological role, could be involved in insertion of integral membrane proteins into the membrane. This chain is Putative membrane protein insertion efficiency factor, found in Anoxybacillus flavithermus (strain DSM 21510 / WK1).